The following is a 115-amino-acid chain: MKFVLLFGVLLVTLFSYSSAEMFDDFDQADEDELLSLIEKEEARAKECTPRFYDCSHDRHSCCRSELFKDVCTCFYPEGGDNEVCTCQQPKHLKYMEKAAGKAKKFGGKIKKWFG.

An N-terminal signal peptide occupies residues 1–20; the sequence is MKFVLLFGVLLVTLFSYSSA. A propeptide spanning residues 21–44 is cleaved from the precursor; sequence EMFDDFDQADEDELLSLIEKEEAR. Intrachain disulfides connect Cys-48–Cys-63, Cys-55–Cys-72, Cys-62–Cys-87, and Cys-74–Cys-85.

Belongs to the neurotoxin 19 (CSTX) family. 01 subfamily. Expressed by the venom gland.

It is found in the secreted. The chain is U3-lycotoxin-Ls1k from Lycosa singoriensis (Wolf spider).